A 434-amino-acid chain; its full sequence is Trigger factor 2 (434 aa).

The PPIase FKBP-type domain occupies 164–247 (GDTVTVDYDC…VKKVERIEIL (84 aa)).

Belongs to the FKBP-type PPIase family. Tig subfamily.

The protein resides in the cytoplasm. It carries out the reaction [protein]-peptidylproline (omega=180) = [protein]-peptidylproline (omega=0). In terms of biological role, involved in protein export. Acts as a chaperone by maintaining the newly synthesized protein in an open conformation. Functions as a peptidyl-prolyl cis-trans isomerase. The sequence is that of Trigger factor 2 from Desulfitobacterium hafniense (strain Y51).